The chain runs to 158 residues: MSIYDIAVENYDGSTYLLKRYKGKVLIIVNTATNCTLNDQFNKLEMLYKKYHKYGLEILSFPCNDFNNQEPGLIKDIYRVYKYKFGITFPIHAKINVNGEHEHPLYTLLKCKQPGLFGSQIKWNFTKFVVDQQGNIVKRFLPCDNPNQMEKLIRQLLK.

The active site involves Thr36.

Belongs to the glutathione peroxidase family.

This chain is Glutathione peroxidase homolog BsaA (bsaA), found in Staphylococcus epidermidis (strain ATCC 35984 / DSM 28319 / BCRC 17069 / CCUG 31568 / BM 3577 / RP62A).